The sequence spans 343 residues: L-threonine 3-dehydrogenase (343 aa).

Cysteine 40 provides a ligand contact to Zn(2+). Residues threonine 42 and histidine 45 each act as charge relay system in the active site. Histidine 65, glutamate 66, cysteine 95, cysteine 98, cysteine 101, and cysteine 109 together coordinate Zn(2+). NAD(+)-binding positions include isoleucine 177, aspartate 197, arginine 202, 264 to 266 (LGI), and 288 to 289 (IY).

It belongs to the zinc-containing alcohol dehydrogenase family. In terms of assembly, homotetramer. Requires Zn(2+) as cofactor.

The protein localises to the cytoplasm. The catalysed reaction is L-threonine + NAD(+) = (2S)-2-amino-3-oxobutanoate + NADH + H(+). The protein operates within amino-acid degradation; L-threonine degradation via oxydo-reductase pathway; glycine from L-threonine: step 1/2. Functionally, catalyzes the NAD(+)-dependent oxidation of L-threonine to 2-amino-3-ketobutyrate. The sequence is that of L-threonine 3-dehydrogenase from Vibrio vulnificus (strain YJ016).